A 511-amino-acid polypeptide reads, in one-letter code: Glutamyl-tRNA(Gln) amidotransferase subunit B, mitochondrial (511 aa).

The N-terminal 6 residues, 1 to 6 (MLRRYL), are a transit peptide targeting the mitochondrion.

Belongs to the GatB/GatE family. GatB subfamily. Subunit of the heterotrimeric GatFAB amidotransferase (AdT) complex, composed of A, B and F subunits.

It is found in the mitochondrion. The enzyme catalyses L-glutamyl-tRNA(Gln) + L-glutamine + ATP + H2O = L-glutaminyl-tRNA(Gln) + L-glutamate + ADP + phosphate + H(+). Functionally, allows the formation of correctly charged Gln-tRNA(Gln) through the transamidation of misacylated Glu-tRNA(Gln) in the mitochondria. The reaction takes place in the presence of glutamine and ATP through an activated gamma-phospho-Glu-tRNA(Gln). In Lodderomyces elongisporus (strain ATCC 11503 / CBS 2605 / JCM 1781 / NBRC 1676 / NRRL YB-4239) (Yeast), this protein is Glutamyl-tRNA(Gln) amidotransferase subunit B, mitochondrial.